A 288-amino-acid chain; its full sequence is Mortality factor 4-like protein 2 (288 aa).

The span at 1–15 (MSSRKQGSQPRGQQS) shows a compositional bias: polar residues. The tract at residues 1–113 (MSSRKQGSQP…RADPTVESEE (113 aa)) is disordered. At S71 the chain carries Phosphoserine. In terms of domain architecture, MRG spans 117-288 (NRMEVKVKIP…ASAEYHRKAL (172 aa)).

Component of the NuA4 histone acetyltransferase complex which contains the catalytic subunit KAT5/TIP60 and the subunits EP400, TRRAP/PAF400, BRD8/SMAP, EPC1, DMAP1/DNMAP1, RUVBL1/TIP49, RUVBL2, ING3, actin, ACTL6A/BAF53A, MORF4L1/MRG15, MORF4L2/MRGX, MRGBP, YEATS4/GAS41 and VPS72/YL1. The NuA4 complex interacts with MYC and the adenovirus E1A protein. MORF4L1 may also participate in the formation of NuA4 related complexes which lack the KAT5/TIP60 catalytic subunit, but which include the SWI/SNF related protein SRCAP. Component of the MSIN3A histone deacetylase complex, which includes SIN3A, HDAC2, ARID4B, MORF4L1, RBBP4/RbAp48, and RBBP7/RbAp46. Interacts with MRFAP1 and RB1. May also interact with one or more as yet undefined members of the TLE (transducin-like enhancer of split) family of transcriptional repressors.

The protein resides in the nucleus. Its function is as follows. Component of the NuA4 histone acetyltransferase complex which is involved in transcriptional activation of select genes principally by acetylation of nucleosomal histone H4 and H2A. This modification may both alter nucleosome - DNA interactions and promote interaction of the modified histones with other proteins which positively regulate transcription. This complex may be required for the activation of transcriptional programs associated with oncogene and proto-oncogene mediated growth induction, tumor suppressor mediated growth arrest and replicative senescence, apoptosis, and DNA repair. The NuA4 complex ATPase and helicase activities seem to be, at least in part, contributed by the association of RUVBL1 and RUVBL2 with EP400. NuA4 may also play a direct role in DNA repair when directly recruited to sites of DNA damage. Also a component of the MSIN3A complex which acts to repress transcription by deacetylation of nucleosomal histones. In Macaca fascicularis (Crab-eating macaque), this protein is Mortality factor 4-like protein 2 (MORF4L2).